Consider the following 283-residue polypeptide: Glutamate racemase (283 aa).

Residues 28–29 and 60–61 contribute to the substrate site; these read DS and YG. Residue Cys-92 is the Proton donor/acceptor of the active site. Residue 93–94 participates in substrate binding; the sequence is NT. Cys-204 serves as the catalytic Proton donor/acceptor. 205 to 206 provides a ligand contact to substrate; that stretch reads TH.

The protein belongs to the aspartate/glutamate racemases family.

The catalysed reaction is L-glutamate = D-glutamate. It participates in cell wall biogenesis; peptidoglycan biosynthesis. Functionally, provides the (R)-glutamate required for cell wall biosynthesis. The polypeptide is Glutamate racemase (Salmonella choleraesuis (strain SC-B67)).